A 1663-amino-acid chain; its full sequence is Cortactin-binding protein 2 (1663 aa).

5 disordered regions span residues 1–26 (MATD…TAEA), 203–225 (KKKT…DMEA), 359–440 (QASH…LHPG), 454–478 (GNAN…SPTS), and 497–615 (SRFT…PPKP). Residues 119 to 276 (RKMQERMSTQ…EQLKRGSDSK (158 aa)) are a coiled coil. Polar residues-rich tracts occupy residues 385–396 (GPSTDSAPDLTN) and 418–435 (QSHS…SANA). Residue Arg498 is modified to Asymmetric dimethylarginine. A compositionally biased stretch (pro residues) spans 606 to 615 (PTTPQLPPKP). ANK repeat units follow at residues 709 to 739 (GRPT…DINY), 743 to 772 (DGHS…QVDA), 776 to 805 (NGFT…DINH), 809 to 838 (GGQT…DRSV), 842 to 871 (DGWT…PARG), and 912 to 942 (EGWT…EPDR). The tract at residues 1449–1490 (KGENGTWRKVSTSPRKKSGHFSSPTWNKPDLNEEGIRNTTTS) is disordered. Ser1524 carries the post-translational modification Phosphoserine. Residues 1579 to 1663 (VSEKEVSPLS…KNEQVEKPNK (85 aa)) form a disordered region. A compositionally biased stretch (polar residues) spans 1586–1595 (PLSSHQTTEC). Residues 1624–1638 (SQNTKRSSSSSNTRQ) show a composition bias toward low complexity. Residues 1645 to 1663 (SKEEIWNLHKNEQVEKPNK) show a composition bias toward basic and acidic residues.

In terms of assembly, interacts with CTTN/cortactin SH3 domain. Interacts with STRN, STRN4/zinedin and MOB4/phocein; this interactions mediate the association with the STRIPAK core complex and may regulate dendritic spine distribution of the STRIPAK complex in hippocampal neurons. Activation of glutamate receptors weakens the interaction with STRN and STRN4.

Its subcellular location is the cytoplasm. The protein resides in the cell cortex. It localises to the cell projection. The protein localises to the dendritic spine. In terms of biological role, regulates the dendritic spine distribution of CTTN/cortactin in hippocampal neurons, and thus controls dendritic spinogenesis and dendritic spine maintenance. Associates with the striatin-interacting phosphatase and kinase (STRIPAK) core complex to regulate dendritic spine distribution of the STRIPAK complex in hippocampal neurons. This is Cortactin-binding protein 2 (CTTNBP2) from Rhinolophus ferrumequinum (Greater horseshoe bat).